The primary structure comprises 608 residues: Probable adenylate kinase 5, chloroplastic (608 aa).

A compositionally biased stretch (low complexity) spans 1-20 (MAASSSSSSPAAASAPFAAP). Residues 1-44 (MAASSSSSSPAAASAPFAAPGPHRRPGLALRPSPPTPPSSSLSC) are disordered. The transit peptide at 1-75 (MAASSSSSSP…GPRGMGLRCR (75 aa)) directs the protein to the chloroplast. 99-104 (ASGKGT) contacts ATP. The tract at residues 119 to 148 (STGDLLRAEVSSGTEIGKKAKEYMDNGMLV) is NMP. AMP is bound by residues threonine 120, arginine 125, 146–148 (MLV), 175–178 (GYPR), and glutamine 182. Residues arginine 209, arginine 213, and 222–223 (IY) each bind ATP. The interval 212–245 (GRRLDPETGKIYHIKNFPPENDEVSARLVTRSDD) is LID. 2 residues coordinate AMP: arginine 242 and arginine 253.

This sequence belongs to the adenylate kinase family.

It localises to the plastid. The protein localises to the chloroplast. It catalyses the reaction AMP + ATP = 2 ADP. Its function is as follows. Catalyzes the reversible transfer of the terminal phosphate group between ATP and AMP. Plays an important role in cellular energy homeostasis and in adenine nucleotide metabolism. The sequence is that of Probable adenylate kinase 5, chloroplastic from Oryza sativa subsp. japonica (Rice).